A 635-amino-acid polypeptide reads, in one-letter code: Extracellular metalloproteinase MEP (635 aa).

The N-terminal stretch at 1–19 is a signal peptide; the sequence is MRAFLLASLASLPAVNVYA. Positions 20–244 are excised as a propeptide; that stretch reads HPTHNSRGLT…VHAVVDYAAE (225 aa). Asparagine 287, asparagine 302, and asparagine 336 each carry an N-linked (GlcNAc...) asparagine glycan. Position 429 (histidine 429) interacts with Zn(2+). The active site involves glutamate 430. A Zn(2+)-binding site is contributed by histidine 433.

It belongs to the peptidase M36 family. Zn(2+) serves as cofactor.

It is found in the secreted. In terms of biological role, secreted metalloproteinase that allows assimilation of proteinaceous substrates. In Leptosphaeria maculans (strain JN3 / isolate v23.1.3 / race Av1-4-5-6-7-8) (Blackleg fungus), this protein is Extracellular metalloproteinase MEP (MEP).